We begin with the raw amino-acid sequence, 607 residues long: uncharacterized protein (607 aa).

This is an uncharacterized protein from Ictalurid herpesvirus 1 (strain Auburn) (IcHV-1).